A 280-amino-acid polypeptide reads, in one-letter code: Antiactivator FleN (280 aa).

Residues 19-26, E153, N181, 215-217, and R221 contribute to the ATP site; these read KGGVGKTN and PYD.

It belongs to the ParA family. Forms homodimers. Interacts with FleQ.

With respect to regulation, ATP-binding allows dimerization and subsequent antagonistic effect against FleQ. Its function is as follows. ATPase that plays an important role in maintaining flagellar number in Pseudomonas aeruginosa. Exhibits anti-activator activity against FleQ, the global transcriptional regulator of flagellar genes. The polypeptide is Antiactivator FleN (Pseudomonas aeruginosa (strain ATCC 15692 / DSM 22644 / CIP 104116 / JCM 14847 / LMG 12228 / 1C / PRS 101 / PAO1)).